Here is a 226-residue protein sequence, read N- to C-terminus: Orotate phosphoribosyltransferase (226 aa).

Residues Arg-107, Lys-108, Lys-111, and 133–141 contribute to the 5-phospho-alpha-D-ribose 1-diphosphate site; that span reads EDLTTDGGS. Thr-137 contributes to the orotate binding site.

Belongs to the purine/pyrimidine phosphoribosyltransferase family. PyrE subfamily. As to quaternary structure, homodimer. Mg(2+) serves as cofactor.

The enzyme catalyses orotidine 5'-phosphate + diphosphate = orotate + 5-phospho-alpha-D-ribose 1-diphosphate. It participates in pyrimidine metabolism; UMP biosynthesis via de novo pathway; UMP from orotate: step 1/2. Its function is as follows. Catalyzes the transfer of a ribosyl phosphate group from 5-phosphoribose 1-diphosphate to orotate, leading to the formation of orotidine monophosphate (OMP). This is Orotate phosphoribosyltransferase from Dinoroseobacter shibae (strain DSM 16493 / NCIMB 14021 / DFL 12).